We begin with the raw amino-acid sequence, 95 residues long: Toxin Tbo-IT2 (95 aa).

Residues 1-23 form the signal peptide; the sequence is MTMKTLCLSLIVIGVLILVAVKA. Residues 24-53 constitute a propeptide that is removed on maturation; that stretch reads EDYVNINSLEEAPEENVNINNLEETPEESR. 5 disulfides stabilise this stretch: cysteine 54–cysteine 68, cysteine 61–cysteine 73, cysteine 67–cysteine 84, cysteine 70–cysteine 92, and cysteine 75–cysteine 82. Residue cysteine 92 is modified to Cysteine amide.

This sequence belongs to the neurotoxin 02 (plectoxin) family. 02 (plectoxin) subfamily. Expressed by the venom gland.

It localises to the secreted. In terms of biological role, this recombinant (non-amidated) toxin shows insecticidal activity on larvae of the housefly Musca domestica and has no activity on a panel of expressed neuronal receptors and ion channels. The protein is Toxin Tbo-IT2 of Tibellus oblongus (Oblong running crab spider).